Reading from the N-terminus, the 312-residue chain is tRNA pseudouridine synthase B (312 aa).

Residue Asp-46 is the Nucleophile of the active site. The substrate site is built by Tyr-74, Tyr-177, and Leu-198.

The protein belongs to the pseudouridine synthase TruB family. Type 1 subfamily.

The enzyme catalyses uridine(55) in tRNA = pseudouridine(55) in tRNA. Functionally, responsible for synthesis of pseudouridine from uracil-55 in the psi GC loop of transfer RNAs. The chain is tRNA pseudouridine synthase B from Buchnera aphidicola subsp. Acyrthosiphon pisum (strain APS) (Acyrthosiphon pisum symbiotic bacterium).